Reading from the N-terminus, the 260-residue chain is OCIA domain-containing protein 1 (260 aa).

Residues 1–110 enclose the OCIA domain; the sequence is MDSPLSDGSR…MRLPNSRLGE (110 aa). Positions 146–260 are disordered; the sequence is DVYTDEGLNP…KNKYGDSWQD (115 aa). A compositionally biased stretch (polar residues) spans 155–164; it reads PSRSTALNLD. The segment covering 205–215 has biased composition (basic and acidic residues); it reads EDLRKKNREGY.

It belongs to the OCIAD1 family.

The polypeptide is OCIA domain-containing protein 1 (Drosophila pseudoobscura pseudoobscura (Fruit fly)).